A 147-amino-acid polypeptide reads, in one-letter code: Epididymal secretory protein E3-alpha (147 aa).

The signal sequence occupies residues 1–25 (MTSSLKIWGILLALLCILCRLCVYS).

In terms of tissue distribution, epididymis, with predominant expression in the corpus region. Moderately expressed in the vas deferens; only low levels are detectable in the caput and cauda regions.

It is found in the secreted. In terms of biological role, possible function in sperm maturation. This chain is Epididymal secretory protein E3-alpha (EDDM3A), found in Homo sapiens (Human).